The sequence spans 421 residues: Ankyrin repeat and SOCS box protein 6 (421 aa).

ANK repeat units follow at residues 67 to 97 (EGVS…NLNF), 102 to 131 (TYYT…DINR), 136 to 166 (HESS…DVNA), 170 to 205 (HGKT…DVKA), 226 to 255 (GGDK…DPSE), and 260 to 289 (ESLT…AYNC). The SOCS box domain occupies 360 to 415 (ALHFSLRQLESYPPPLKHLCRVAIRLYLQPWPVDVKVKALPLPDRLKWYLLSEHSG).

This sequence belongs to the ankyrin SOCS box (ASB) family. Binds APS. Identified in a complex with ELOB and ELOC. Interacts with CUL5 and RNF7. Interacts with SQSTM1.

The protein localises to the cytoplasm. It participates in protein modification; protein ubiquitination. Probable substrate-recognition component of a SCF-like ECS (Elongin-Cullin-SOCS-box protein) E3 ubiquitin-protein ligase complex which mediates the ubiquitination and subsequent proteasomal degradation of target proteins. May play a role in the regulation of cell proliferation and autophagy by promoting the ubiquitination and degradation of SQSTM1. This Pongo abelii (Sumatran orangutan) protein is Ankyrin repeat and SOCS box protein 6 (ASB6).